We begin with the raw amino-acid sequence, 164 residues long: Shikimate kinase (164 aa).

10–15 (GVGKTT) serves as a coordination point for ATP. Thr14 provides a ligand contact to Mg(2+). The substrate site is built by Asp28, Arg52, and Gly75. Arg116 is an ATP binding site. Substrate is bound at residue Arg134. Arg151 serves as a coordination point for ATP.

Belongs to the shikimate kinase family. As to quaternary structure, monomer. It depends on Mg(2+) as a cofactor.

It is found in the cytoplasm. The enzyme catalyses shikimate + ATP = 3-phosphoshikimate + ADP + H(+). It participates in metabolic intermediate biosynthesis; chorismate biosynthesis; chorismate from D-erythrose 4-phosphate and phosphoenolpyruvate: step 5/7. Functionally, catalyzes the specific phosphorylation of the 3-hydroxyl group of shikimic acid using ATP as a cosubstrate. The polypeptide is Shikimate kinase (Streptococcus equi subsp. zooepidemicus (strain MGCS10565)).